The primary structure comprises 124 residues: Small ribosomal subunit protein uS12 (124 aa).

3-methylthioaspartic acid is present on D89.

This sequence belongs to the universal ribosomal protein uS12 family. As to quaternary structure, part of the 30S ribosomal subunit. Contacts proteins S8 and S17. May interact with IF1 in the 30S initiation complex.

Its function is as follows. With S4 and S5 plays an important role in translational accuracy. Interacts with and stabilizes bases of the 16S rRNA that are involved in tRNA selection in the A site and with the mRNA backbone. Located at the interface of the 30S and 50S subunits, it traverses the body of the 30S subunit contacting proteins on the other side and probably holding the rRNA structure together. The combined cluster of proteins S8, S12 and S17 appears to hold together the shoulder and platform of the 30S subunit. The sequence is that of Small ribosomal subunit protein uS12 from Yersinia pestis (strain Pestoides F).